The following is a 261-amino-acid chain: Serine acetyltransferase (261 aa).

Belongs to the transferase hexapeptide repeat family.

The protein resides in the cytoplasm. The catalysed reaction is L-serine + acetyl-CoA = O-acetyl-L-serine + CoA. Its pathway is amino-acid biosynthesis; L-cysteine biosynthesis; L-cysteine from L-serine: step 1/2. In Buchnera aphidicola subsp. Schizaphis graminum (strain Sg), this protein is Serine acetyltransferase (cysE).